The primary structure comprises 253 residues: Discoidin-1 subunit A (253 aa).

The residue at position 2 (S2) is an N-acetylserine. In terms of domain architecture, F5/8 type C spans 2–152 (STQGLVQLLA…ISLRCEFYTQ (151 aa)). A Cell attachment site motif is present at residues 79–81 (RGD).

As to quaternary structure, tetramer of four different chains (A to D). In terms of tissue distribution, stalk cells.

The protein resides in the cytoplasm. Its function is as follows. Galactose- and N-acetylgalactosamine-binding lectin. May play a role in cell-substratum adhesion rather than in cell-cell adhesion. May be necessary for the maintenance of normal elongate morphology during aggregation. This chain is Discoidin-1 subunit A (dscA-1), found in Dictyostelium discoideum (Social amoeba).